Consider the following 78-residue polypeptide: Major outer membrane lipoprotein Lpp (78 aa).

A signal peptide spans 1-19 (MKAKIVLGAVILASGLLAG). The N-palmitoyl cysteine moiety is linked to residue Cys20. The S-diacylglycerol cysteine moiety is linked to residue Cys20. Repeats lie at residues 25-35 (NAQLDQISSDV) and 39-49 (NTQVQQLSSDV). A coiled-coil region spans residues 28–62 (LDQISSDVNRLNTQVQQLSSDVQSANAQAKAAYEA). Lys78 is modified (N6-murein peptidoglycan lysine).

This sequence belongs to the Lpp family. Homotrimer.

It is found in the cell outer membrane. Its subcellular location is the secreted. It localises to the cell wall. In terms of biological role, a highly abundant outer membrane lipoprotein that controls the distance between the inner and outer membranes. The only protein known to be covalently linked to the peptidoglycan network (PGN). Also non-covalently binds the PGN. The link between the cell outer membrane and PGN contributes to maintenance of the structural and functional integrity of the cell envelope, and maintains the correct distance between the PGN and the outer membrane. This chain is Major outer membrane lipoprotein Lpp, found in Proteus mirabilis.